The chain runs to 363 residues: sn-glycerol-3-phosphate import ATP-binding protein UgpC (363 aa).

Residues 4–235 (VVLRNVRKTY…PATTFVASFI (232 aa)) enclose the ABC transporter domain. An ATP-binding site is contributed by 37 to 44 (GPSGCGKS).

It belongs to the ABC transporter superfamily. sn-glycerol-3-phosphate importer (TC 3.A.1.1.3) family. As to quaternary structure, the complex is composed of two ATP-binding proteins (UgpC), two transmembrane proteins (UgpA and UgpE) and a solute-binding protein (UgpB).

The protein localises to the cell inner membrane. It catalyses the reaction sn-glycerol 3-phosphate(out) + ATP + H2O = sn-glycerol 3-phosphate(in) + ADP + phosphate + H(+). In terms of biological role, part of the ABC transporter complex UgpBAEC involved in sn-glycerol-3-phosphate (G3P) import. Responsible for energy coupling to the transport system. In Rhodopseudomonas palustris (strain ATCC BAA-98 / CGA009), this protein is sn-glycerol-3-phosphate import ATP-binding protein UgpC.